The chain runs to 159 residues: Major strawberry allergen Fra a 1-C (159 aa).

The protein belongs to the BetVI family. In terms of assembly, monomer.

In Fragaria ananassa (Strawberry), this protein is Major strawberry allergen Fra a 1-C.